Here is a 161-residue protein sequence, read N- to C-terminus: Type II secretion system protein M (161 aa).

The Cytoplasmic segment spans residues 1-16 (MNELRRRWQVMSQRER). A helical transmembrane segment spans residues 17 to 37 (LMALACGGLVVLCLLYYLIWA). Topologically, residues 38–161 (PWQESVRQWQ…VTRLSLERVL (124 aa)) are periplasmic.

Belongs to the GSP M family. As to quaternary structure, type II secretion system is composed of four main components: the outer membrane complex, the inner membrane complex, the cytoplasmic secretion ATPase and the periplasm-spanning pseudopilus. Forms homodimers. Interacts with OutL/GspL. Interacts with OutE/GspE and OutF/GspF.

It localises to the cell inner membrane. Its function is as follows. Inner membrane component of the type II secretion system required for the energy-dependent secretion of extracellular factors such as proteases and toxins from the periplasm. Plays a role in the complex assembly and recruits OutL resulting in a stable complex in the inner membrane. Provides thus a link between the energy-providing OutE protein in the cytoplasm and the rest of the T2SS machinery. The chain is Type II secretion system protein M (outM) from Dickeya chrysanthemi (Pectobacterium chrysanthemi).